The chain runs to 518 residues: Protein nucleotidyltransferase YdiU (518 aa).

Basic and acidic residues predominate over residues 1 to 10 (MTHLHFDNRL). The segment at 1–25 (MTHLHFDNRLRQQLPGDPEEGARRR) is disordered. 8 residues coordinate ATP: Gly100, Gly102, Arg103, Lys123, Asp135, Gly136, Arg193, and Arg200. Asp270 (proton acceptor) is an active-site residue. Positions 271 and 280 each coordinate Mg(2+). Asp280 contacts ATP.

It belongs to the SELO family. The cofactor is Mg(2+). Mn(2+) is required as a cofactor.

It catalyses the reaction L-seryl-[protein] + ATP = 3-O-(5'-adenylyl)-L-seryl-[protein] + diphosphate. The enzyme catalyses L-threonyl-[protein] + ATP = 3-O-(5'-adenylyl)-L-threonyl-[protein] + diphosphate. The catalysed reaction is L-tyrosyl-[protein] + ATP = O-(5'-adenylyl)-L-tyrosyl-[protein] + diphosphate. It carries out the reaction L-histidyl-[protein] + UTP = N(tele)-(5'-uridylyl)-L-histidyl-[protein] + diphosphate. It catalyses the reaction L-seryl-[protein] + UTP = O-(5'-uridylyl)-L-seryl-[protein] + diphosphate. The enzyme catalyses L-tyrosyl-[protein] + UTP = O-(5'-uridylyl)-L-tyrosyl-[protein] + diphosphate. In terms of biological role, nucleotidyltransferase involved in the post-translational modification of proteins. It can catalyze the addition of adenosine monophosphate (AMP) or uridine monophosphate (UMP) to a protein, resulting in modifications known as AMPylation and UMPylation. This is Protein nucleotidyltransferase YdiU from Xanthomonas euvesicatoria pv. vesicatoria (strain 85-10) (Xanthomonas campestris pv. vesicatoria).